Reading from the N-terminus, the 125-residue chain is uncharacterized protein (125 aa).

This sequence to transposase of insertion sequence IS6501.

This is an uncharacterized protein from Sinorhizobium fredii (strain NBRC 101917 / NGR234).